The sequence spans 468 residues: MYQRMLRCGAELGSPGGGSSGGAGGRLALLWIVPLTLSGLLGVAWGASSLGAHHIHHFHGSSKHHSVPIAIYRSPASLRGGHAGTTYIFSKGGGQITYKWPPNDRPSTRADRLAIGFSTVQKEAVLVRVDSSSGLGDYLELHIHQGKIGVKFNVGTDDIAIEESNAIINDGKYHVVRFTRSGGNATLQVDSWPVIERYPAGNNDNERLAIARQRIPYRLGRVVDEWLLDKGRQLTIFNSQATIIIGGKEQGQPFQGQLSGLYYNGLKVLNMAAENDANIAIVGNVRLVGEVPSSMTTESTATAMQSEMSTSIMETTTTLATSTARRGKPPTKEPISQTTDDILVASAECPSDDEDIDPCEPSSGGLANPTRVGGREPYPGSAEVIRESSSTTGMVVGIVAAAALCILILLYAMYKYRNRDEGSYHVDESRNYISNSAQSNGAVVKEKQPSSAKSANKNKKNKDKEYYV.

A signal peptide spans 1–46 (MYQRMLRCGAELGSPGGGSSGGAGGRLALLWIVPLTLSGLLGVAWG). Topologically, residues 47 to 391 (ASSLGAHHIH…AEVIRESSST (345 aa)) are extracellular. Positions 87–285 (YIFSKGGGQI…DANIAIVGNV (199 aa)) constitute a Laminin G-like domain. Residues aspartate 137 and valine 154 each coordinate Ca(2+). Residue asparagine 184 is glycosylated (N-linked (GlcNAc...) asparagine). The interval 201 to 230 (GNNDNERLAIARQRIPYRLGRVVDEWLLDK) is essential for interaction with CBLN1; modulates interaction affinity with NLGN1, NLGN2 and NLGN3; prevents interaction with DAG1/alpha-dystroglycan; modulates interaction with alpha-latrotoxin. Ca(2+) contacts are provided by isoleucine 236 and asparagine 238. A glycan (O-linked (Xyl...) (heparan sulfate) serine) is linked at serine 346. The tract at residues 350–381 (PSDDEDIDPCEPSSGGLANPTRVGGREPYPGS) is disordered. Residues 392–414 (TGMVVGIVAAAALCILILLYAMY) form a helical membrane-spanning segment. Topologically, residues 415 to 468 (KYRNRDEGSYHVDESRNYISNSAQSNGAVVKEKQPSSAKSANKNKKNKDKEYYV) are cytoplasmic. Positions 435–468 (NSAQSNGAVVKEKQPSSAKSANKNKKNKDKEYYV) are disordered. Phosphoserine occurs at positions 450, 451, and 454.

The protein belongs to the neurexin family. As to quaternary structure, the cytoplasmic C-terminal region binds to CASK. Binds NLGN1, NLGN2 and NLGN3, DAG1 (alpha-dystroglycan) and alpha-latrotoxin. Binding to neuroligins is calcium-dependent, and the binding preference ranks as follow: NLGN1 &gt; NLGN4 &gt;&gt; NLGN3 &gt; NLGN2. Interacts with CBLN2 and more weakly with CBLN4. Interacts with CBLN1; interaction is CBLN1 hexamer form-dependent; CBLN1-binding is calcium-independent; isoform 1b does not interact with CBLN1. Interacts with CLSTN3. In terms of processing, N-glycosylated. Post-translationally, O-glycosylated; contains heparan sulfate. Heparan sulfate attachment is required for synapse development by mediating interactions with neuroligins. Brain.

The protein resides in the presynaptic cell membrane. Functionally, neuronal cell surface protein involved in cell recognition and cell adhesion by forming intracellular junctions through binding to neuroligins. Plays a role in formation of synaptic junctions. Functions as part of a trans-synaptic complex by binding to cerebellins and postsynaptic GRID1. This interaction helps regulate the activity of NMDA and AMPA receptors at hippocampal synapses without affecting synapse formation. NRXN1B-CBLN2-GRID1 complex transduce presynaptic signals into postsynaptic NMDAR response. This is Neurexin-1-beta from Rattus norvegicus (Rat).